The primary structure comprises 292 residues: Glycine-rich RNA-binding protein RZ1B (292 aa).

Positions 12–90 constitute an RRM domain; that stretch reads SRIFVGGLSW…KVISVNKAEP (79 aa). A Phosphoserine modification is found at S20. The interval 93–114 is disordered; it reads GGEDVDQLKKGGGYSSRGKGTE. The CCHC-type zinc-finger motif lies at 117-132; it reads CFKCRRPGHWARDCPS. Basic and acidic residues-rich tracts occupy residues 180–210 and 220–268; these read DGRR…HYPF and FVSD…EGRP. The tract at residues 180–292 is disordered; it reads DGRRDRDGGR…GGRPSSYERW (113 aa).

In terms of tissue distribution, expressed in roots, rosette and cauline leaves, stems, floral buds and flowers.

It localises to the nucleus. Functionally, binds RNA and DNA sequences non-specifically. May be involved in tolerance to cold stress. The chain is Glycine-rich RNA-binding protein RZ1B from Arabidopsis thaliana (Mouse-ear cress).